A 755-amino-acid chain; its full sequence is Xaa-Pro dipeptidyl-peptidase (755 aa).

Active-site charge relay system residues include S348, D468, and H498.

This sequence belongs to the peptidase S15 family. Homodimer.

It localises to the cytoplasm. It catalyses the reaction Hydrolyzes Xaa-Pro-|- bonds to release unblocked, N-terminal dipeptides from substrates including Ala-Pro-|-p-nitroanilide and (sequentially) Tyr-Pro-|-Phe-Pro-|-Gly-Pro-|-Ile.. In terms of biological role, removes N-terminal dipeptides sequentially from polypeptides having unsubstituted N-termini provided that the penultimate residue is proline. This Streptococcus thermophilus (strain CNRZ 1066) protein is Xaa-Pro dipeptidyl-peptidase.